Consider the following 240-residue polypeptide: UDP-2,3-diacylglucosamine hydrolase (240 aa).

5 residues coordinate Mn(2+): D8, H10, D41, N79, and H114. Residue 79 to 80 (NR) participates in substrate binding. 5 residues coordinate substrate: D122, S160, N164, K167, and H195. Residues H195 and H197 each contribute to the Mn(2+) site.

Belongs to the LpxH family. It depends on Mn(2+) as a cofactor.

It localises to the cell inner membrane. It carries out the reaction UDP-2-N,3-O-bis[(3R)-3-hydroxytetradecanoyl]-alpha-D-glucosamine + H2O = 2-N,3-O-bis[(3R)-3-hydroxytetradecanoyl]-alpha-D-glucosaminyl 1-phosphate + UMP + 2 H(+). The protein operates within glycolipid biosynthesis; lipid IV(A) biosynthesis; lipid IV(A) from (3R)-3-hydroxytetradecanoyl-[acyl-carrier-protein] and UDP-N-acetyl-alpha-D-glucosamine: step 4/6. Its function is as follows. Hydrolyzes the pyrophosphate bond of UDP-2,3-diacylglucosamine to yield 2,3-diacylglucosamine 1-phosphate (lipid X) and UMP by catalyzing the attack of water at the alpha-P atom. Involved in the biosynthesis of lipid A, a phosphorylated glycolipid that anchors the lipopolysaccharide to the outer membrane of the cell. This chain is UDP-2,3-diacylglucosamine hydrolase, found in Pectobacterium atrosepticum (strain SCRI 1043 / ATCC BAA-672) (Erwinia carotovora subsp. atroseptica).